We begin with the raw amino-acid sequence, 406 residues long: Acetylornithine aminotransferase (406 aa).

Residues 113–114 (GT) and Phe145 each bind pyridoxal 5'-phosphate. Arg148 is a binding site for N(2)-acetyl-L-ornithine. 233–236 (DEIQ) is a pyridoxal 5'-phosphate binding site. Lys262 carries the N6-(pyridoxal phosphate)lysine modification. Ser290 contributes to the N(2)-acetyl-L-ornithine binding site. Position 291 (Thr291) interacts with pyridoxal 5'-phosphate.

This sequence belongs to the class-III pyridoxal-phosphate-dependent aminotransferase family. ArgD subfamily. In terms of assembly, homodimer. The cofactor is pyridoxal 5'-phosphate.

Its subcellular location is the cytoplasm. It carries out the reaction N(2)-acetyl-L-ornithine + 2-oxoglutarate = N-acetyl-L-glutamate 5-semialdehyde + L-glutamate. Its pathway is amino-acid biosynthesis; L-arginine biosynthesis; N(2)-acetyl-L-ornithine from L-glutamate: step 4/4. The polypeptide is Acetylornithine aminotransferase (Leptospira interrogans serogroup Icterohaemorrhagiae serovar Lai (strain 56601)).